Reading from the N-terminus, the 759-residue chain is Protein hunchback (759 aa).

Disordered regions lie at residues 30–51 (EPGH…PIPS) and 171–215 (SSEK…EDMK). Polar residues predominate over residues 39 to 51 (SVASSPRQSPIPS). Thr179 is modified (phosphothreonine). Residues Ser189, Ser208, Ser210, and Ser211 each carry the phosphoserine modification. Residues 199 to 215 (EPEKEHDQMSNSSEDMK) are compositionally biased toward basic and acidic residues. 4 C2H2-type zinc fingers span residues 241-263 (YKCK…TRTH), 270-292 (LQCP…IRKH), 298-320 (FQCD…RKSH), and 326-350 (YRCA…KYGH). Disordered regions lie at residues 366-419 (LVID…TSQL), 513-565 (QLQQ…PQQP), and 606-696 (MTSP…APAS). 2 stretches are compositionally biased toward low complexity: residues 399-419 (VAAV…TSQL) and 513-522 (QLQQQNQQQS). Residues 523 to 532 (DNEEEEQDDE) are compositionally biased toward acidic residues. 2 positions are modified to phosphoserine: Ser537 and Ser540. Positions 655–696 (ANTSASSTASSSGNSSNASSNGNSSSNSSSNGTSSAAAAPAS) are enriched in low complexity. C2H2-type zinc fingers lie at residues 706 to 728 (YECK…MGYH) and 734 to 758 (FKCN…RNAH).

Belongs to the hunchback C2H2-type zinc-finger protein family.

It localises to the nucleus. Its function is as follows. Gap class segmentation protein that controls development of head structures. The polypeptide is Protein hunchback (Drosophila yakuba (Fruit fly)).